The sequence spans 483 residues: PAT complex subunit CCDC47 (483 aa).

An N-terminal signal peptide occupies residues 1–20; sequence MKAFHTFCVVLLVFGSVSEA. At 21-135 the chain is on the cytoplasmic side; the sequence is KFDDFEDEED…PAHLQNSWES (115 aa). The tract at residues 46 to 118 is disordered; sequence MEDSVTESPQ…PDTSSSKNKD (73 aa). Over residues 60 to 104 the composition is skewed to acidic residues; that stretch reads TEDDEDETTVELEGQDENQEGDFEDADTQEGDTESEPYDDEEFEG. Over residues 105 to 118 the composition is skewed to basic and acidic residues; the sequence is YEDKPDTSSSKNKD. Residues 136–155 form a helical membrane-spanning segment; the sequence is YYLEILMVTGLLAYIMNYII. Residues 156 to 483 are Lumenal-facing; that stretch reads GKNKNSRLAQ…KMKQIKVKAM (328 aa). A glycan (N-linked (GlcNAc...) asparagine) is linked at N178. Residues 424–483 form a disordered region; it reads QRQEAAQSRREEKKRAEKERIMNEEDPEKQRRLEEAALRRDQKKLEKKQMKMKQIKVKAM. Positions 430 to 472 are enriched in basic and acidic residues; that stretch reads QSRREEKKRAEKERIMNEEDPEKQRRLEEAALRRDQKKLEKKQ. Positions 451-481 form a coiled coil; the sequence is EKQRRLEEAALRRDQKKLEKKQMKMKQIKVK. A compositionally biased stretch (basic residues) spans 473 to 483; it reads MKMKQIKVKAM.

The protein belongs to the CCDC47 family. In terms of assembly, component of the PAT complex, composed of WDR83OS/Asterix and CCDC47. The PAT complex is part of the multi-pass translocon (MPT) complex, composed of three subcomplexes, the GEL complex (composed of RAB5IF/OPTI and TMCO1), the BOS complex (composed of NCLN/Nicalin, NOMO1 and TMEM147) and the PAT complex (composed of WDR83OS/Asterix and CCDC47). The MPT complex associates with the SEC61 complex. Interacts with VCP, HSPA5, DERL1, DERL2 and SELENOS.

The protein resides in the endoplasmic reticulum membrane. It localises to the rough endoplasmic reticulum membrane. Functionally, component of the multi-pass translocon (MPT) complex that mediates insertion of multi-pass membrane proteins into the lipid bilayer of membranes. The MPT complex takes over after the SEC61 complex: following membrane insertion of the first few transmembrane segments of proteins by the SEC61 complex, the MPT complex occludes the lateral gate of the SEC61 complex to promote insertion of subsequent transmembrane regions. Within the MPT complex, the PAT subcomplex sequesters any highly polar regions in the transmembrane domains away from the non-polar membrane environment until they can be buried in the interior of the fully assembled protein. Within the PAT subcomplex, CCDC47 occludes the lateral gate of the SEC61 complex. Involved in the regulation of calcium ion homeostasis in the ER. Required for proper protein degradation via the ERAD (ER-associated degradation) pathway. Has an essential role in the maintenance of ER organization during embryogenesis. The protein is PAT complex subunit CCDC47 (CCDC47) of Pongo abelii (Sumatran orangutan).